The primary structure comprises 299 residues: uncharacterized protein (299 aa).

This is an uncharacterized protein from Bacillus subtilis (strain 168).